Here is a 321-residue protein sequence, read N- to C-terminus: Lipoyl synthase (321 aa).

The [4Fe-4S] cluster site is built by C68, C73, C79, C94, C98, C101, and S308. In terms of domain architecture, Radical SAM core spans 80-297; sequence FNHGTATFMI…KAIALDLGFT (218 aa).

The protein belongs to the radical SAM superfamily. Lipoyl synthase family. [4Fe-4S] cluster is required as a cofactor.

It localises to the cytoplasm. The catalysed reaction is [[Fe-S] cluster scaffold protein carrying a second [4Fe-4S](2+) cluster] + N(6)-octanoyl-L-lysyl-[protein] + 2 oxidized [2Fe-2S]-[ferredoxin] + 2 S-adenosyl-L-methionine + 4 H(+) = [[Fe-S] cluster scaffold protein] + N(6)-[(R)-dihydrolipoyl]-L-lysyl-[protein] + 4 Fe(3+) + 2 hydrogen sulfide + 2 5'-deoxyadenosine + 2 L-methionine + 2 reduced [2Fe-2S]-[ferredoxin]. Its pathway is protein modification; protein lipoylation via endogenous pathway; protein N(6)-(lipoyl)lysine from octanoyl-[acyl-carrier-protein]: step 2/2. Catalyzes the radical-mediated insertion of two sulfur atoms into the C-6 and C-8 positions of the octanoyl moiety bound to the lipoyl domains of lipoate-dependent enzymes, thereby converting the octanoylated domains into lipoylated derivatives. This chain is Lipoyl synthase, found in Tolumonas auensis (strain DSM 9187 / NBRC 110442 / TA 4).